The primary structure comprises 198 residues: ATP synthase subunit b (198 aa).

The chain crosses the membrane as a helical span at residues 25–45 (PLSELLIGTLAFGLLVAFFFW).

It belongs to the ATPase B chain family. As to quaternary structure, F-type ATPases have 2 components, F(1) - the catalytic core - and F(0) - the membrane proton channel. F(1) has five subunits: alpha(3), beta(3), gamma(1), delta(1), epsilon(1). F(0) has three main subunits: a(1), b(2) and c(10-14). The alpha and beta chains form an alternating ring which encloses part of the gamma chain. F(1) is attached to F(0) by a central stalk formed by the gamma and epsilon chains, while a peripheral stalk is formed by the delta and b chains.

The protein localises to the cell membrane. F(1)F(0) ATP synthase produces ATP from ADP in the presence of a proton or sodium gradient. F-type ATPases consist of two structural domains, F(1) containing the extramembraneous catalytic core and F(0) containing the membrane proton channel, linked together by a central stalk and a peripheral stalk. During catalysis, ATP synthesis in the catalytic domain of F(1) is coupled via a rotary mechanism of the central stalk subunits to proton translocation. Its function is as follows. Component of the F(0) channel, it forms part of the peripheral stalk, linking F(1) to F(0). In Frankia alni (strain DSM 45986 / CECT 9034 / ACN14a), this protein is ATP synthase subunit b.